The chain runs to 453 residues: tRNA modification GTPase MnmE (453 aa).

Positions 22, 79, and 119 each coordinate (6S)-5-formyl-5,6,7,8-tetrahydrofolate. A TrmE-type G domain is found at 215–376 (GMKVVIAGRP…LRQHLKECMG (162 aa)). N225 provides a ligand contact to K(+). Residues 225–230 (NAGKSS), 244–250 (TDIAGTT), 269–272 (DTAG), and 334–337 (NKAD) contribute to the GTP site. S229 provides a ligand contact to Mg(2+). T244, I246, and T249 together coordinate K(+). T250 provides a ligand contact to Mg(2+). Residue K453 coordinates (6S)-5-formyl-5,6,7,8-tetrahydrofolate.

This sequence belongs to the TRAFAC class TrmE-Era-EngA-EngB-Septin-like GTPase superfamily. TrmE GTPase family. As to quaternary structure, homodimer. Heterotetramer of two MnmE and two MnmG subunits. The cofactor is K(+).

It is found in the cytoplasm. Its function is as follows. Exhibits a very high intrinsic GTPase hydrolysis rate. Involved in the addition of a carboxymethylaminomethyl (cmnm) group at the wobble position (U34) of certain tRNAs, forming tRNA-cmnm(5)s(2)U34. In Vibrio cholerae serotype O1 (strain ATCC 39541 / Classical Ogawa 395 / O395), this protein is tRNA modification GTPase MnmE.